The chain runs to 222 residues: Adenylate kinase, chloroplastic (222 aa).

15–20 is a binding site for ATP; it reads ASGKGT. An NMP region spans residues 35 to 64; sequence SAGDLLRAEIAAGSENGKRAKEFMEKGQLV. Residues arginine 41, 62–64, 91–94, and glutamine 98 contribute to the AMP site; these read QLV and GYPR. The interval 128 to 161 is LID; it reads GRRLDPVTGKIYHLKYSPPENEEIASRLTQRFDD. Arginine 129 is an ATP binding site. Arginine 158 serves as a coordination point for AMP. Residue alanine 195 coordinates ATP.

Monomer.

The protein localises to the plastid. It is found in the chloroplast. The catalysed reaction is AMP + ATP = 2 ADP. Catalyzes the reversible transfer of the terminal phosphate group between ATP and AMP. Plays an important role in cellular energy homeostasis and in adenine nucleotide metabolism. The maize enzyme also works with CMP, albeit with 10% of the activity with AMP. The chain is Adenylate kinase, chloroplastic (ADK1) from Zea mays (Maize).